Consider the following 190-residue polypeptide: Tegument antigen (190 aa).

EF-hand domains follow at residues 8 to 43 (SQME…YRLD) and 51 to 77 (IARF…KVSE). Positions 55, 57, 59, 61, and 66 each coordinate Ca(2+).

In terms of tissue distribution, adult and schistosomula tegument.

This is Tegument antigen from Schistosoma mansoni (Blood fluke).